A 75-amino-acid chain; its full sequence is Small ribosomal subunit protein bS18 (75 aa).

This sequence belongs to the bacterial ribosomal protein bS18 family. In terms of assembly, part of the 30S ribosomal subunit. Forms a tight heterodimer with protein bS6.

In terms of biological role, binds as a heterodimer with protein bS6 to the central domain of the 16S rRNA, where it helps stabilize the platform of the 30S subunit. The protein is Small ribosomal subunit protein bS18 of Shewanella amazonensis (strain ATCC BAA-1098 / SB2B).